Consider the following 65-residue polypeptide: LTCVKSNSIWFPTSEDCPPGQNLCFKRWQYISPRMYDFTRGCAATCPKAEYRDVINCCGTDKCNK.

4 disulfides stabilise this stretch: C3–C24, C17–C42, C46–C57, and C58–C63.

It belongs to the three-finger toxin family. Short-chain subfamily. Aminergic toxin sub-subfamily. Monomer. As to expression, expressed by the venom gland.

It localises to the secreted. Its function is as follows. Binds irreversibly and specifically to M1 (CHRM1) muscarinic acetylcholine receptors, blocking further binding of antagonists and preventing the action of agonists. This Dendroaspis angusticeps (Eastern green mamba) protein is Muscarinic m1-toxin2.